A 552-amino-acid chain; its full sequence is CTP synthase (552 aa).

The segment at 1–270 (MTKYVFVTGG…DRIICEELKL (270 aa)) is amidoligase domain. Ser-13 serves as a coordination point for CTP. Position 13 (Ser-13) interacts with UTP. Residues 14–19 (SLGKGI) and Asp-71 contribute to the ATP site. Asp-71 and Glu-144 together coordinate Mg(2+). Residues 151-153 (DIE), 191-196 (KTKPTQ), and Lys-227 each bind CTP. UTP is bound by residues 191-196 (KTKPTQ) and Lys-227. In terms of domain architecture, Glutamine amidotransferase type-1 spans 295-547 (TIGMVGKYVD…VEAALANKQA (253 aa)). L-glutamine is bound at residue Gly-356. The active-site Nucleophile; for glutamine hydrolysis is the Cys-383. Residues 384–387 (LGMQ), Glu-407, and Arg-473 contribute to the L-glutamine site. Catalysis depends on residues His-520 and Glu-522.

The protein belongs to the CTP synthase family. In terms of assembly, homotetramer.

It catalyses the reaction UTP + L-glutamine + ATP + H2O = CTP + L-glutamate + ADP + phosphate + 2 H(+). It carries out the reaction L-glutamine + H2O = L-glutamate + NH4(+). The enzyme catalyses UTP + NH4(+) + ATP = CTP + ADP + phosphate + 2 H(+). It functions in the pathway pyrimidine metabolism; CTP biosynthesis via de novo pathway; CTP from UDP: step 2/2. With respect to regulation, allosterically activated by GTP, when glutamine is the substrate; GTP has no effect on the reaction when ammonia is the substrate. The allosteric effector GTP functions by stabilizing the protein conformation that binds the tetrahedral intermediate(s) formed during glutamine hydrolysis. Inhibited by the product CTP, via allosteric rather than competitive inhibition. Functionally, catalyzes the ATP-dependent amination of UTP to CTP with either L-glutamine or ammonia as the source of nitrogen. Regulates intracellular CTP levels through interactions with the four ribonucleotide triphosphates. This chain is CTP synthase, found in Burkholderia cenocepacia (strain ATCC BAA-245 / DSM 16553 / LMG 16656 / NCTC 13227 / J2315 / CF5610) (Burkholderia cepacia (strain J2315)).